A 260-amino-acid polypeptide reads, in one-letter code: Flap endonuclease Xni (260 aa).

D105 lines the Mg(2+) pocket. The 5'-3' exonuclease domain occupies 164–254 (SQFLDLLALA…LKDFRVNGPA (91 aa)). L172, A173, P181, I183, and I186 together coordinate K(+). The interaction with DNA stretch occupies residues 185 to 190 (GIGPKS).

Belongs to the Xni family. The cofactor is Mg(2+). Requires K(+) as cofactor.

Functionally, has flap endonuclease activity. During DNA replication, flap endonucleases cleave the 5'-overhanging flap structure that is generated by displacement synthesis when DNA polymerase encounters the 5'-end of a downstream Okazaki fragment. The sequence is that of Flap endonuclease Xni from Shewanella sp. (strain ANA-3).